The chain runs to 230 residues: Proteasome subunit alpha (230 aa).

Belongs to the peptidase T1A family. The 20S proteasome core is composed of 14 alpha and 14 beta subunits that assemble into four stacked heptameric rings, resulting in a barrel-shaped structure. The two inner rings, each composed of seven catalytic beta subunits, are sandwiched by two outer rings, each composed of seven alpha subunits. The catalytic chamber with the active sites is on the inside of the barrel. Has a gated structure, the ends of the cylinder being occluded by the N-termini of the alpha-subunits. Is capped by the proteasome-associated ATPase, ARC.

The protein localises to the cytoplasm. It functions in the pathway protein degradation; proteasomal Pup-dependent pathway. With respect to regulation, the formation of the proteasomal ATPase ARC-20S proteasome complex, likely via the docking of the C-termini of ARC into the intersubunit pockets in the alpha-rings, may trigger opening of the gate for substrate entry. Interconversion between the open-gate and close-gate conformations leads to a dynamic regulation of the 20S proteasome proteolysis activity. In terms of biological role, component of the proteasome core, a large protease complex with broad specificity involved in protein degradation. The protein is Proteasome subunit alpha of Thermomonospora curvata (strain ATCC 19995 / DSM 43183 / JCM 3096 / KCTC 9072 / NBRC 15933 / NCIMB 10081 / Henssen B9).